We begin with the raw amino-acid sequence, 694 residues long: Proprotein convertase subtilisin/kexin type 9 (694 aa).

Residues 1–34 form the signal peptide; sequence MGTHCSAWLRWPLLPLLPPLLLLLLLLCPTGAGA. The propeptide occupies 35 to 155; it reads QDEDGDYEEL…IEEDSFVFAQ (121 aa). The residue at position 41 (Tyr41) is a Sulfotyrosine. A Phosphoserine modification is found at Ser50. Residues 158-470 form the Peptidase S8 domain; sequence PWNLERIIPA…RTVWSAHSGP (313 aa). Catalysis depends on charge relay system residues Asp189 and His229. 2 cysteine pairs are disulfide-bonded: Cys226–Cys258 and Cys326–Cys361. Residue Ser389 is the Charge relay system of the active site. The segment at 453-694 is C-terminal domain; the sequence is ETGGQLLCRT…RPSAKASWVQ (242 aa). 3 cysteine pairs are disulfide-bonded: Cys460/Cys530, Cys480/Cys529, and Cys489/Cys512. The Cell attachment site motif lies at 499–501; the sequence is RGD. Asn536 is a glycosylation site (N-linked (GlcNAc...) asparagine). 6 disulfide bridges follow: Cys537–Cys604, Cys555–Cys603, Cys565–Cys591, Cys611–Cys682, Cys629–Cys681, and Cys638–Cys657. Ser691 carries the phosphoserine modification.

It belongs to the peptidase S8 family. As to quaternary structure, monomer. Can self-associate to form dimers and higher multimers which may have increased LDLR degrading activity. The precursor protein but not the mature protein may form multimers. Interacts with APOB, VLDLR, LRP8/APOER2 and BACE1. The full-length immature form (pro-PCSK9) interacts with SCNN1A, SCNN1B and SCNN1G. The pro-PCSK9 form (via C-terminal domain) interacts with LDLR. Interacts (via the C-terminal domain) with ANXA2 (via repeat Annexin 1); the interaction inhibits the degradation of LDLR. Ca(2+) is required as a cofactor. Cleavage by furin and PCSK5 generates a truncated inactive protein that is unable to induce LDLR degradation. In terms of processing, undergoes autocatalytic cleavage in the endoplasmic reticulum to release the propeptide from the N-terminus and the cleavage of the propeptide is strictly required for its maturation and activation. The cleaved propeptide however remains associated with the catalytic domain through non-covalent interactions, preventing potential substrates from accessing its active site. As a result, it is secreted from cells as a propeptide-containing, enzymatically inactive protein. Post-translationally, phosphorylation protects the propeptide against proteolysis. Hepatocytes, kidney mesenchymal cells, intestinal ileum, colon epithelia and embryonic brain telencephalon neurons.

The protein localises to the cytoplasm. Its subcellular location is the secreted. It is found in the endosome. The protein resides in the lysosome. It localises to the cell surface. The protein localises to the endoplasmic reticulum. Its subcellular location is the golgi apparatus. With respect to regulation, its proteolytic activity is autoinhibited by the non-covalent binding of the propeptide to the catalytic domain. Inhibited by EGTA. Functionally, crucial player in the regulation of plasma cholesterol homeostasis. Binds to low-density lipid receptor family members: low density lipoprotein receptor (LDLR), very low density lipoprotein receptor (VLDLR), apolipoprotein E receptor (LRP1/APOER) and apolipoprotein receptor 2 (LRP8/APOER2), and promotes their degradation in intracellular acidic compartments. Acts via a non-proteolytic mechanism to enhance the degradation of the hepatic LDLR through a clathrin LDLRAP1/ARH-mediated pathway. May prevent the recycling of LDLR from endosomes to the cell surface or direct it to lysosomes for degradation. Can induce ubiquitination of LDLR leading to its subsequent degradation. Inhibits intracellular degradation of APOB via the autophagosome/lysosome pathway in a LDLR-independent manner. Involved in the disposal of non-acetylated intermediates of BACE1 in the early secretory pathway. Inhibits epithelial Na(+) channel (ENaC)-mediated Na(+) absorption by reducing ENaC surface expression primarily by increasing its proteasomal degradation. Regulates neuronal apoptosis via modulation of LRP8/APOER2 levels and related anti-apoptotic signaling pathways. This Mus musculus (Mouse) protein is Proprotein convertase subtilisin/kexin type 9 (Pcsk9).